The chain runs to 62 residues: DNA gyrase inhibitor YacG (62 aa).

Residues cysteine 9, cysteine 12, cysteine 27, and cysteine 31 each contribute to the Zn(2+) site. Positions 43–52 are enriched in basic and acidic residues; sequence GYRIPGEKAP. The interval 43 to 62 is disordered; sequence GYRIPGEKAPESGGEEPGDE.

This sequence belongs to the DNA gyrase inhibitor YacG family. As to quaternary structure, interacts with GyrB. The cofactor is Zn(2+).

Its function is as follows. Inhibits all the catalytic activities of DNA gyrase by preventing its interaction with DNA. Acts by binding directly to the C-terminal domain of GyrB, which probably disrupts DNA binding by the gyrase. The protein is DNA gyrase inhibitor YacG of Geobacter sp. (strain M21).